Here is a 256-residue protein sequence, read N- to C-terminus: Triosephosphate isomerase (256 aa).

Residue 12–14 coordinates substrate; sequence NWK. His-99 (electrophile) is an active-site residue. The active-site Proton acceptor is the Glu-169. Residues Gly-175, Ser-214, and 235 to 236 each bind substrate; that span reads GG.

It belongs to the triosephosphate isomerase family. Homodimer.

It is found in the cytoplasm. The catalysed reaction is D-glyceraldehyde 3-phosphate = dihydroxyacetone phosphate. Its pathway is carbohydrate biosynthesis; gluconeogenesis. It participates in carbohydrate degradation; glycolysis; D-glyceraldehyde 3-phosphate from glycerone phosphate: step 1/1. Its function is as follows. Involved in the gluconeogenesis. Catalyzes stereospecifically the conversion of dihydroxyacetone phosphate (DHAP) to D-glyceraldehyde-3-phosphate (G3P). This Rhizobium meliloti (strain 1021) (Ensifer meliloti) protein is Triosephosphate isomerase.